Consider the following 462-residue polypeptide: MVSPRKGKRIRMLKKNDIIQVAISDLSHEGAGVAKHDGFVFFVDNALPEEVIDMRVLKVNKNSGFGKVEAYHYLSSARNADVNLTYLRTGIADLGHLTYEDQLTFKKKQVQDSLYKIAGISDVTVESTIGMTEPLAYRNKAQVPVRRVNGQLETGFFRKHSHDLIPISDYYIQDKEIDRLINFTRDLLRRFDIKPYDETEQTGLLRNIVVRRGHYSGEMMLVLVTTRPKVFRVDQVIEKIVEAFPAVVSIIQNINDKNTNAIFGKDFKTLYGKDTITDSMLGNNYAISAQSFYQVNTVMAEKLYQTAIAFSDLSKDDIVIDAYSGIGTIGLSFAKTVKAVYGVEVIEAAVRDAQQNAALNGITNAYFVADTAEHAMATWAKDGIKPSVILVDPPRKGLTESFIQASVAMGPQKITYVSCNPATMARDIKRYQELGYKLAKVQPVDLFPQTHHVECVVLLIKE.

Residues 12 to 70 (MLKKNDIIQVAISDLSHEGAGVAKHDGFVFFVDNALPEEVIDMRVLKVNKNSGFGKVEA) form the TRAM domain. Q294, Y323, E344, and D392 together coordinate S-adenosyl-L-methionine. Catalysis depends on C419, which acts as the Nucleophile.

Belongs to the class I-like SAM-binding methyltransferase superfamily. RNA M5U methyltransferase family.

This is an uncharacterized protein from Streptococcus pyogenes serotype M1.